Reading from the N-terminus, the 75-residue chain is Xibalbin-13 2 (75 aa).

The signal sequence occupies residues 1 to 27 (MKEANTRRYIYLCLVVVLLSIIITTEA). Residues 28–30 (EDD) constitute a propeptide that is removed on maturation. 4 cysteine pairs are disulfide-bonded: Cys-34-Cys-49, Cys-41-Cys-54, Cys-48-Cys-65, and Cys-56-Cys-63.

The protein belongs to the xibalbin-13 family. Expressed by the venom gland and the whole body.

The protein resides in the secreted. Functionally, probable neurotoxin. Strongly inhibits voltage-gated potassium channels (Kv1.1/KCNA1, Kv1.2/KCNA2, Kv1.3/KCNA3, and Kv1.6/KCNA6, with the highest toxicity against Kv1.1 (85.1% inhibition at 1 uM)) and mildly inhibits sodium channels (Nav1.2/SCN2A, Nav1.4/SCN4A, Nav1.5/SCN5A, Nav1.6/SCN8A, and BgNav). Induces activation of protein kinase A type II (PKA-II) and MAP kinase Erk1/2 in primary nociceptive and non-nociceptive sensory neurons. Does not show cytotoxic activity. Does not have an impact on Ca2+, cAMP, and NO signaling in the cell types analyzed. Does not interfere with the adhesion of leukocytes to endothelial cells. This is Xibalbin-13 2 from Xibalbanus tulumensis (Blind cave remipede).